The sequence spans 148 residues: Large ribosomal subunit protein bL9 (148 aa).

It belongs to the bacterial ribosomal protein bL9 family.

In terms of biological role, binds to the 23S rRNA. In Staphylococcus haemolyticus (strain JCSC1435), this protein is Large ribosomal subunit protein bL9.